The primary structure comprises 215 residues: Flavin-dependent thymidylate synthase (215 aa).

The ThyX domain occupies 1–215; it reads MDVRFISLTK…FPTVAAALEW (215 aa). FAD-binding positions include S56, 79–81, and E87; that span reads RHR. DUMP contacts are provided by residues 76 to 79, 87 to 91, and R155; these read QILR and EFSLR. Positions 79–89 match the ThyX motif motif; that stretch reads RHRSFSFQEFS. An FAD-binding site is contributed by H177. R182 serves as a coordination point for dUMP. R182 serves as the catalytic Involved in ionization of N3 of dUMP, leading to its activation.

The protein belongs to the thymidylate synthase ThyX family. Homotetramer. FAD is required as a cofactor.

The catalysed reaction is dUMP + (6R)-5,10-methylene-5,6,7,8-tetrahydrofolate + NADPH + H(+) = dTMP + (6S)-5,6,7,8-tetrahydrofolate + NADP(+). It participates in pyrimidine metabolism; dTTP biosynthesis. Its function is as follows. Catalyzes the reductive methylation of 2'-deoxyuridine-5'-monophosphate (dUMP) to 2'-deoxythymidine-5'-monophosphate (dTMP) while utilizing 5,10-methylenetetrahydrofolate (mTHF) as the methyl donor, and NADPH and FADH(2) as the reductant. The polypeptide is Flavin-dependent thymidylate synthase (Synechocystis sp. (strain ATCC 27184 / PCC 6803 / Kazusa)).